The following is a 127-amino-acid chain: Glycine cleavage system H protein (127 aa).

Residues 24–105 (TLTIGITDLA…AYDAWLFKIK (82 aa)) form the Lipoyl-binding domain. Position 65 is an N6-lipoyllysine (lysine 65).

Belongs to the GcvH family. As to quaternary structure, the glycine cleavage system is composed of four proteins: P, T, L and H. It depends on (R)-lipoate as a cofactor.

Functionally, the glycine cleavage system catalyzes the degradation of glycine. The H protein shuttles the methylamine group of glycine from the P protein to the T protein. In Ralstonia nicotianae (strain ATCC BAA-1114 / GMI1000) (Ralstonia solanacearum), this protein is Glycine cleavage system H protein.